The sequence spans 227 residues: Lipoprotein-releasing system ATP-binding protein LolD (227 aa).

One can recognise an ABC transporter domain in the interval 6–227 (LEMRGITKSY…RLDAGQLSDV (222 aa)). 43-50 (APSGAGKS) is an ATP binding site.

Belongs to the ABC transporter superfamily. Lipoprotein translocase (TC 3.A.1.125) family. In terms of assembly, the complex is composed of two ATP-binding proteins (LolD) and two transmembrane proteins (LolC and LolE).

Its subcellular location is the cell inner membrane. Functionally, part of the ABC transporter complex LolCDE involved in the translocation of mature outer membrane-directed lipoproteins, from the inner membrane to the periplasmic chaperone, LolA. Responsible for the formation of the LolA-lipoprotein complex in an ATP-dependent manner. In Roseobacter denitrificans (strain ATCC 33942 / OCh 114) (Erythrobacter sp. (strain OCh 114)), this protein is Lipoprotein-releasing system ATP-binding protein LolD.